The chain runs to 360 residues: Phospho-N-acetylmuramoyl-pentapeptide-transferase (360 aa).

10 helical membrane passes run 27–47 (GALI…INSL), 71–91 (TPTM…LLWA), 93–113 (LSSI…SIGF), 134–154 (LGLE…NGQA), 168–188 (FIIN…VGAG), 199–219 (GLAI…AYLS), 239–259 (LAVV…FNAP), 262–282 (AIFM…TVAV), 288–308 (IVLV…IIQV), and 337–357 (QVVI…LSTL).

Belongs to the glycosyltransferase 4 family. MraY subfamily. The cofactor is Mg(2+).

The protein resides in the cell inner membrane. The catalysed reaction is UDP-N-acetyl-alpha-D-muramoyl-L-alanyl-gamma-D-glutamyl-meso-2,6-diaminopimeloyl-D-alanyl-D-alanine + di-trans,octa-cis-undecaprenyl phosphate = di-trans,octa-cis-undecaprenyl diphospho-N-acetyl-alpha-D-muramoyl-L-alanyl-D-glutamyl-meso-2,6-diaminopimeloyl-D-alanyl-D-alanine + UMP. It participates in cell wall biogenesis; peptidoglycan biosynthesis. Functionally, catalyzes the initial step of the lipid cycle reactions in the biosynthesis of the cell wall peptidoglycan: transfers peptidoglycan precursor phospho-MurNAc-pentapeptide from UDP-MurNAc-pentapeptide onto the lipid carrier undecaprenyl phosphate, yielding undecaprenyl-pyrophosphoryl-MurNAc-pentapeptide, known as lipid I. This Mesorhizobium japonicum (strain LMG 29417 / CECT 9101 / MAFF 303099) (Mesorhizobium loti (strain MAFF 303099)) protein is Phospho-N-acetylmuramoyl-pentapeptide-transferase.